Reading from the N-terminus, the 203-residue chain is Ras-related protein Rab-18 (203 aa).

Residues S20, G23, K24, S25, S26, D37, P38, T43, G69, K126, D128, and A155 each coordinate GTP. The Effector region signature appears at 40–48 (QAATIGVDF). S-geranylgeranyl cysteine attachment occurs at residues C201 and C203. A Cysteine methyl ester modification is found at C203.

Belongs to the small GTPase superfamily. Rab family.

It catalyses the reaction GTP + H2O = GDP + phosphate + H(+). In terms of biological role, the small GTPases Rab are key regulators of intracellular membrane trafficking, from the formation of transport vesicles to their fusion with membranes. Rabs cycle between an inactive GDP-bound form and an active GTP-bound form that is able to recruit to membranes different sets of downstream effectors directly responsible for vesicle formation, movement, tethering and fusion. Plays a role in apical endocytosis/recycling. May be implicated in transport between the plasma membrane and early endosomes. Plays a role in the shedding of pathogen spores from intestinal cells. This Caenorhabditis elegans protein is Ras-related protein Rab-18 (rab-18).